Reading from the N-terminus, the 145-residue chain is D-aminoacyl-tRNA deacylase (145 aa).

The Gly-cisPro motif, important for rejection of L-amino acids signature appears at 137–138 (GP).

This sequence belongs to the DTD family. Homodimer.

The protein localises to the cytoplasm. It carries out the reaction glycyl-tRNA(Ala) + H2O = tRNA(Ala) + glycine + H(+). It catalyses the reaction a D-aminoacyl-tRNA + H2O = a tRNA + a D-alpha-amino acid + H(+). An aminoacyl-tRNA editing enzyme that deacylates mischarged D-aminoacyl-tRNAs. Also deacylates mischarged glycyl-tRNA(Ala), protecting cells against glycine mischarging by AlaRS. Acts via tRNA-based rather than protein-based catalysis; rejects L-amino acids rather than detecting D-amino acids in the active site. By recycling D-aminoacyl-tRNA to D-amino acids and free tRNA molecules, this enzyme counteracts the toxicity associated with the formation of D-aminoacyl-tRNA entities in vivo and helps enforce protein L-homochirality. This chain is D-aminoacyl-tRNA deacylase, found in Exiguobacterium sibiricum (strain DSM 17290 / CCUG 55495 / CIP 109462 / JCM 13490 / 255-15).